The primary structure comprises 126 residues: 13 kDa ribonucleoprotein-associated protein (126 aa).

It belongs to the eukaryotic ribosomal protein eL8 family. In terms of assembly, component of the U3 snoRNP particle. Binds to the C'/D and B/C motifs in U3 snoRNA. Component of the 25S U4/U6.U5 tri-snRNP particle, a subcomplex of the spliceosome. Binds to the 5' stem-loop of U4 snRNA.

The protein localises to the nucleus. It localises to the nucleolus. Functionally, common component of the spliceosome and rRNA processing machinery. In association with the spliceosomal U4/U6.U5 tri-snRNP particle, required for splicing of pre-mRNA. In association with box C/D snoRNPs, required for processing of pre-ribosomal RNA (rRNA) and site-specific 2'-O-methylation of substrate RNAs. Essential for the accumulation and stability of U4 snRNA, U6 snRNA, and box C/D snoRNAs. This Yarrowia lipolytica (strain CLIB 122 / E 150) (Yeast) protein is 13 kDa ribonucleoprotein-associated protein (SNU13).